The following is a 314-amino-acid chain: L-lactate dehydrogenase (314 aa).

NAD(+) is bound by residues Val-16, Asp-37, Lys-42, Tyr-68, and 82-83; that span reads GV. Residues Gln-85 and Arg-91 each contribute to the substrate site. NAD(+) is bound by residues Ser-104, 121 to 123, and Thr-146; that span reads ASN. 123 to 126 is a binding site for substrate; that stretch reads NPVD. 151–154 contributes to the substrate binding site; the sequence is DTTR. The beta-D-fructose 1,6-bisphosphate site is built by Arg-156 and His-171. The active-site Proton acceptor is His-178. At Tyr-223 the chain carries Phosphotyrosine. Thr-232 lines the substrate pocket.

The protein belongs to the LDH/MDH superfamily. LDH family. Homotetramer.

It is found in the cytoplasm. It carries out the reaction (S)-lactate + NAD(+) = pyruvate + NADH + H(+). The protein operates within fermentation; pyruvate fermentation to lactate; (S)-lactate from pyruvate: step 1/1. Allosterically activated by fructose 1,6-bisphosphate (FBP). In terms of biological role, catalyzes the conversion of lactate to pyruvate. This chain is L-lactate dehydrogenase, found in Lactococcus lactis subsp. cremoris (strain MG1363).